Here is a 448-residue protein sequence, read N- to C-terminus: Cysteine--tRNA ligase (448 aa).

Residue Cys-29 coordinates Zn(2+). Residues 31–41 (PTVYDTAHIGN) carry the 'HIGH' region motif. Basic and acidic residues predominate over residues 79 to 91 (ATTGADRGADQAH). The disordered stretch occupies residues 79 to 106 (ATTGADRGADQAHRGPLPRRHGPLNAAP). The Zn(2+) site is built by Cys-206 and Glu-235. The 'KMSKS' region motif lies at 265-269 (RMSKS). Residue Lys-268 coordinates ATP.

It belongs to the class-I aminoacyl-tRNA synthetase family. As to quaternary structure, monomer. The cofactor is Zn(2+).

The protein resides in the cytoplasm. The enzyme catalyses tRNA(Cys) + L-cysteine + ATP = L-cysteinyl-tRNA(Cys) + AMP + diphosphate. This Azospirillum brasilense protein is Cysteine--tRNA ligase (cysS).